The following is a 95-amino-acid chain: Small ribosomal subunit protein uS19 (95 aa).

The segment at 76 to 95 (PTRRFGGHADKKAKKGELKK) is disordered. Residues 82–95 (GHADKKAKKGELKK) show a composition bias toward basic and acidic residues.

Belongs to the universal ribosomal protein uS19 family.

Protein S19 forms a complex with S13 that binds strongly to the 16S ribosomal RNA. This Thermotoga maritima (strain ATCC 43589 / DSM 3109 / JCM 10099 / NBRC 100826 / MSB8) protein is Small ribosomal subunit protein uS19 (rpsS).